The chain runs to 518 residues: Centromere protein T (518 aa).

Residues 1–70 (MADLSSPDGD…RKHSHGTGSV (70 aa)) are disordered. Basic and acidic residues predominate over residues 19 to 28 (HVLDTADSHT). The segment covering 34–57 (STQTNPQRRRSQTPYSKRQGSQRK) has biased composition (polar residues). T86 bears the Phosphothreonine mark. Residues 94 to 381 (ILLTAPESST…EPHQLFEPPP (288 aa)) are flexible stalk domain. Disordered stretches follow at residues 102–156 (STVM…KRKQ), 271–362 (VHHS…ELSS), and 375–412 (QLFEPPPSPGVAAVSSESVPAKLPSRTRTAQPRHHQDP). The segment covering 294–306 (TPSTGTRPQSQMS) has biased composition (polar residues). 7 positions are modified to phosphoserine: S313, S324, S333, S345, S346, S357, and S382. Positions 326-343 (ELREAVGSKEAEEPKDLE) are enriched in basic and acidic residues. Over residues 384–395 (GVAAVSSESVPA) the composition is skewed to low complexity.

It belongs to the CENP-T/CNN1 family. In terms of assembly, component of the CENPA-CAD complex, composed of CENPI, CENPK, CENPL, CENPO, CENPP, CENPQ, CENPR and CENPS. The CENPA-CAD complex is probably recruited on centromeres by the CENPA-NAC complex, at least composed of CENPA, CENPC, CENPH, CENPM, CENPN, CENPT and CENPU. Identified in a centromeric complex containing histones H2A, H2B, H3 and H4, and at least CENPA, CENPB, CENPC, CENPT, CENPN, HJURP, SUPT16H, SSRP1 and RSF1. Interacts (via N-terminus) with the NDC80 complex. Heterodimer with CENPW; this dimer coassembles with CENPS-CENPX heterodimers at centromeres to form the tetrameric CENP-T-W-S-X complex. In terms of processing, dynamically phosphorylated during the cell cycle. Phosphorylated during G2 phase, metaphase and anaphase, but not during telophase or G1 phase.

It localises to the nucleus. It is found in the chromosome. The protein resides in the centromere. Its subcellular location is the kinetochore. In terms of biological role, component of the CENPA-NAC (nucleosome-associated) complex, a complex that plays a central role in assembly of kinetochore proteins, mitotic progression and chromosome segregation. The CENPA-NAC complex recruits the CENPA-CAD (nucleosome distal) complex and may be involved in incorporation of newly synthesized CENPA into centromeres. Part of a nucleosome-associated complex that binds specifically to histone H3-containing nucleosomes at the centromere, as opposed to nucleosomes containing CENPA. Component of the heterotetrameric CENP-T-W-S-X complex that binds and supercoils DNA, and plays an important role in kinetochore assembly. CENPT has a fundamental role in kinetochore assembly and function. It is one of the inner kinetochore proteins, with most further proteins binding downstream. Required for normal chromosome organization and normal progress through mitosis. The sequence is that of Centromere protein T (Cenpt) from Rattus norvegicus (Rat).